A 262-amino-acid polypeptide reads, in one-letter code: tRNA pseudouridine synthase B (262 aa).

Aspartate 77 (nucleophile) is an active-site residue.

The protein belongs to the pseudouridine synthase TruB family. Type 1 subfamily.

It carries out the reaction uridine(55) in tRNA = pseudouridine(55) in tRNA. Its function is as follows. Responsible for synthesis of pseudouridine from uracil-55 in the psi GC loop of transfer RNAs. The sequence is that of tRNA pseudouridine synthase B from Protochlamydia amoebophila (strain UWE25).